Here is a 211-residue protein sequence, read N- to C-terminus: uncharacterized protein (211 aa).

A coiled-coil region spans residues 105–143 (IEENEFDKVRKSSDKLINEIEKTKSSLREDVKTALSEVR). A helical transmembrane segment spans residues 191–211 (QWFTGFVGVVSSVVLIILFYF).

It belongs to the CCDC90 family.

It is found in the mitochondrion. Its subcellular location is the membrane. This is an uncharacterized protein from Schizosaccharomyces pombe (strain 972 / ATCC 24843) (Fission yeast).